The sequence spans 358 residues: Phospho-N-acetylmuramoyl-pentapeptide-transferase (358 aa).

The next 10 membrane-spanning stretches (helical) occupy residues 21–41 (YLTL…FVVG), 71–91 (TMGG…WADL), 95–115 (YIWV…VDDY), 133–153 (FWQS…ASVA), 166–186 (VAVN…VGSS), 197–217 (GLAV…AYAA), 234–254 (AGEL…FLWF), 261–281 (VFMG…LAVL), 286–306 (LVLF…MLQV), and 337–357 (IVRF…TLKI).

This sequence belongs to the glycosyltransferase 4 family. MraY subfamily. It depends on Mg(2+) as a cofactor.

The protein localises to the cell inner membrane. It catalyses the reaction UDP-N-acetyl-alpha-D-muramoyl-L-alanyl-gamma-D-glutamyl-meso-2,6-diaminopimeloyl-D-alanyl-D-alanine + di-trans,octa-cis-undecaprenyl phosphate = di-trans,octa-cis-undecaprenyl diphospho-N-acetyl-alpha-D-muramoyl-L-alanyl-D-glutamyl-meso-2,6-diaminopimeloyl-D-alanyl-D-alanine + UMP. The protein operates within cell wall biogenesis; peptidoglycan biosynthesis. Catalyzes the initial step of the lipid cycle reactions in the biosynthesis of the cell wall peptidoglycan: transfers peptidoglycan precursor phospho-MurNAc-pentapeptide from UDP-MurNAc-pentapeptide onto the lipid carrier undecaprenyl phosphate, yielding undecaprenyl-pyrophosphoryl-MurNAc-pentapeptide, known as lipid I. In Nitrosococcus oceani (strain ATCC 19707 / BCRC 17464 / JCM 30415 / NCIMB 11848 / C-107), this protein is Phospho-N-acetylmuramoyl-pentapeptide-transferase.